Reading from the N-terminus, the 201-residue chain is MBF complex negative regulatory component yox1 (201 aa).

The span at 1–22 (MSLSDSPSKSGNTGKDLISNNE) shows a compositional bias: polar residues. The disordered stretch occupies residues 1–42 (MSLSDSPSKSGNTGKDLISNNEAKNHEDEETHQKKRRRRTTD). A compositionally biased stretch (basic and acidic residues) spans 23–32 (AKNHEDEETH). A DNA-binding region (homeobox) is located at residues 33–92 (QKKRRRRTTDAEATLLEQYFLKTPKPSLIERQELSKKLKSSMTPRELQIWFQNKRQSLRR).

Component of the MBF transcription factor complex. In terms of processing, phosphorylated in response to hydroxyurea. Phosphorylation inhibits the repressor activity and is dependent on rad3. However, the regulation of yox1 by rad3 is probably indirect.

It is found in the nucleus. Functionally, negative regulatory component of the MBF transcription factor complex involved in cell-cycle G1/S phase-specific gene expression and more particularly DNA replication checkpoint-dependent gene expression. This chain is MBF complex negative regulatory component yox1 (yox1), found in Schizosaccharomyces pombe (strain 972 / ATCC 24843) (Fission yeast).